The sequence spans 57 residues: U17-myrmicitoxin-Tb1a (57 aa).

Positions 1–29 are cleaved as a signal peptide; it reads MEKNRTNIFSVYLMITFLLISIFITMVMS. A propeptide spanning residues 30-33 is cleaved from the precursor; that stretch reads DGEA. An intrachain disulfide couples C42 to C53. At A56 the chain carries Alanine amide.

Post-translationally, O-glycosylated. In terms of tissue distribution, expressed by the venom gland.

The protein localises to the secreted. In terms of biological role, serine protease inhibitor which exhibits antifibrinolytic, antielastolytic and antimicrobial activities. Displays antimicrobial activity against bacteria and fungi. Likely functions in the innate immune response to microbial infection and possibly in the venom, as an antifibrinolytic agent. The chain is U17-myrmicitoxin-Tb1a from Tetramorium bicarinatum (Tramp ant).